The sequence spans 365 residues: Protein-glutamate methylesterase/protein-glutamine glutaminase 1 (365 aa).

The Response regulatory domain occupies 4–121 (KVLVVDDSQF…SRDSVVLKKR (118 aa)). D55 bears the 4-aspartylphosphate mark. A disordered region spans residues 138-173 (AARSTTQPSGVRPSALGANLSSSRSPRPASSAPSAP). Residues 158 to 172 (SSSRSPRPASSAPSA) are compositionally biased toward low complexity. A CheB-type methylesterase domain is found at 182 to 365 (KLVAIGASTG…QVWQRLVSDV (184 aa)). Catalysis depends on residues S189, H216, and D310.

The protein belongs to the CheB family. Phosphorylated by CheA. Phosphorylation of the N-terminal regulatory domain activates the methylesterase activity.

It localises to the cytoplasm. The catalysed reaction is [protein]-L-glutamate 5-O-methyl ester + H2O = L-glutamyl-[protein] + methanol + H(+). It catalyses the reaction L-glutaminyl-[protein] + H2O = L-glutamyl-[protein] + NH4(+). Functionally, involved in chemotaxis. Part of a chemotaxis signal transduction system that modulates chemotaxis in response to various stimuli. Catalyzes the demethylation of specific methylglutamate residues introduced into the chemoreceptors (methyl-accepting chemotaxis proteins or MCP) by CheR. Also mediates the irreversible deamidation of specific glutamine residues to glutamic acid. This Saccharophagus degradans (strain 2-40 / ATCC 43961 / DSM 17024) protein is Protein-glutamate methylesterase/protein-glutamine glutaminase 1.